Reading from the N-terminus, the 311-residue chain is JNK1/MAPK8-associated membrane protein (311 aa).

Over 1–57 the chain is Lumenal; the sequence is MAVDIQPACLGLYCGKTLLFKNGSTEIYGECGVCPRGQRTNAQKYCQPCTESPELYD. An N-linked (GlcNAc...) asparagine glycan is attached at Asn-22. Residues 58-78 traverse the membrane as a helical segment; that stretch reads WLYLGFMAMLPLVLHWFFIEW. At 79–87 the chain is on the cytoplasmic side; that stretch reads YSGKKSSSA. Residues 88-108 traverse the membrane as a helical segment; it reads LFQHITALFECSMAAIITLLV. At 109 to 149 the chain is on the lumenal side; it reads SDPVGVLYIRSCRVLMLSDWYTMLYNPSPDYVTTVHCTHEA. A helical transmembrane segment spans residues 150 to 170; that stretch reads VYPLYTIVFIYYAFCLVLMML. The Cytoplasmic segment spans residues 171–188; sequence LRPLLVKKIACGLGKSDR. The helical transmembrane segment at 189–209 threads the bilayer; sequence FKSIYAALYFFPILTVLQAVG. Position 210 (Gly-210) is a topological domain, lumenal. The helical transmembrane segment at 211 to 231 threads the bilayer; the sequence is GLLYYAFPYIILVLSLVTLAV. Residues 232-250 lie on the Cytoplasmic side of the membrane; sequence YMSASEIENCYDLLVRKKR. A helical transmembrane segment spans residues 251–271; that stretch reads LIVLFSHWLLHAYGIISISRV. The Lumenal segment spans residues 272 to 277; sequence DKLEQD. A helical transmembrane segment spans residues 278–298; the sequence is LPLLALVPTPALFYLFTAKFT. Residues 299-311 are Cytoplasmic-facing; the sequence is EPSRILSEGANGH.

Interacts with RNF5 and MAPK8, but not with MAPK9. Binding to MAPK8 occurs before and after exposure to stress, such as UV irradiation. After exposure to stress, interacts with phosphorylated MAPK8. Competes with DUSP10 for MAPK8 binding. Associates with multiple components of the proteasome and with ERAD regulatory proteins including AMFR/GP78, CANX, PSMC1, PSMC2, PSMC3/TBP1, PSMC5, PSMC6, PSMD8, SEC61-ALPHA and UFD1. Interacts with DERL1 (in the presence of misfolded protein CFTR(F508del)). Ubiquitinated by RNF5 via 'Lys-63'-linked ubiquitin linkage in a UBE2N-dependent manner. Ubiquitination decreases association with components of the proteasome and ERAD.

Its subcellular location is the endoplasmic reticulum membrane. Functionally, regulates the duration of MAPK8 activity in response to various stress stimuli. Facilitates degradation of misfolded endoplasmic reticulum (ER) proteins through the recruitment of components of the proteasome and endoplasmic reticulum-associated degradation (ERAD) system. This chain is JNK1/MAPK8-associated membrane protein (JKAMP), found in Homo sapiens (Human).